The chain runs to 338 residues: m7GpppX diphosphatase (338 aa).

A disordered region spans residues 1 to 36 (MADTAPQLKRKREQEAEEAETPSTEEKEAGVGNGTS). A2 bears the N-acetylalanine mark. The nuclear localization signal (NLS) motif lies at 9 to 12 (KRKR). Phosphoserine is present on residues S23 and S100. N6-acetyllysine occurs at positions 137 and 141. The short motif at 141 to 153 (KYMRQDLRLIRET) is the nuclear export sequence (NES) element. Residues W174, E184, D204, K206, and 267–278 (HYLPSYYHLHVH) each bind substrate. Positions 274–278 (HLHVH) match the Histidine triad motif motif. Catalysis depends on H276, which acts as the Nucleophile.

The protein belongs to the HIT family. In terms of assembly, homodimer. Associates with components of the exosome multienzyme ribonuclease complex, such as EXOSC3 and EXOSC4. Interacts with NDOR1.

The protein resides in the cytoplasm. Its subcellular location is the nucleus. It carries out the reaction a 5'-end (N(7)-methyl 5'-triphosphoguanosine)-ribonucleoside in mRNA + H2O = N(7)-methyl-GMP + a 5'-end diphospho-ribonucleoside in mRNA + 2 H(+). With respect to regulation, the hydrolytic product 7-methylguanosine diphosphate (m7GDP) efficiently inhibits the decapping scavenger activity and acts as a competitive inhibitor in vitro. Inhibited by 2,4-diaminoquinazoline. In terms of biological role, decapping scavenger enzyme that catalyzes the cleavage of a residual cap structure following the degradation of mRNAs by the 3'-&gt;5' exosome-mediated mRNA decay pathway. Hydrolyzes cap analog structures like 7-methylguanosine nucleoside triphosphate (m7GpppG) with up to 10 nucleotide substrates (small capped oligoribonucleotides) and specifically releases 5'-phosphorylated RNA fragments and 7-methylguanosine monophosphate (m7GMP). Cleaves cap analog structures like tri-methyl guanosine nucleoside triphosphate (m3(2,2,7)GpppG) with very poor efficiency. Does not hydrolyze unmethylated cap analog (GpppG) and shows no decapping activity on intact m7GpppG-capped mRNA molecules longer than 25 nucleotides. Does not hydrolyze 7-methylguanosine diphosphate (m7GDP) to m7GMP. May also play a role in the 5'-&gt;3 mRNA decay pathway; m7GDP, the downstream product released by the 5'-&gt;3' mRNA mediated decapping activity, may be also converted by DCPS to m7GMP. Binds to m7GpppG and strongly to m7GDP. Plays a role in first intron splicing of pre-mRNAs. Inhibits activation-induced cell death. This Mus musculus (Mouse) protein is m7GpppX diphosphatase (Dcps).